Here is a 185-residue protein sequence, read N- to C-terminus: Photosystem I assembly protein Ycf4 (185 aa).

3 helical membrane-spanning segments follow: residues 22 to 42, 57 to 77, and 101 to 121; these read FFFA…GFSS, ILFV…LFFS, and FYVF…LRVP.

It belongs to the Ycf4 family.

It localises to the plastid. It is found in the chloroplast thylakoid membrane. In terms of biological role, seems to be required for the assembly of the photosystem I complex. The sequence is that of Photosystem I assembly protein Ycf4 from Gnetum parvifolium (Small-leaved jointfir).